We begin with the raw amino-acid sequence, 665 residues long: T-cell differentiation antigen CD6 (665 aa).

The signal sequence occupies residues 1-16 (MWLFLGIAGLLTAVLS). Residues 17–398 (GLPSPAPSGQ…VKDKDSQGLT (382 aa)) are Extracellular-facing. 3 N-linked (GlcNAc...) asparagine glycosylation sites follow: Asn29, Asn34, and Asn49. 3 consecutive SRCR domains span residues 45–155 (IRLV…VTCA), 160–259 (VRLV…VVCS), and 264–360 (WRLT…VVCS). Cystine bridges form between Cys54/Cys87, Cys69/Cys143, Cys82/Cys154, Cys128/Cys136, Cys169/Cys203, Cys185/Cys248, Cys198/Cys258, Cys229/Cys239, Cys289/Cys349, Cys302/Cys359, and Cys329/Cys339. N-linked (GlcNAc...) asparagine glycans are attached at residues Asn111 and Asn117. Asn228 is a glycosylation site (N-linked (GlcNAc...) asparagine). Asn344 and Asn367 each carry an N-linked (GlcNAc...) asparagine glycan. A helical transmembrane segment spans residues 399 to 419 (LLILCIVLGILLLVSTIFIVI). Topologically, residues 420–665 (LLLRAKGQYA…EEDYDDIGAA (246 aa)) are cytoplasmic. The interval 536-665 (ADPRPCVADV…EEDYDDIGAA (130 aa)) is disordered. Composition is skewed to polar residues over residues 548 to 565 (RGSQ…TSSE) and 580 to 595 (NSQA…TEQP). Residues 608–621 (SGPSADDSSSTSSG) are compositionally biased toward low complexity. Over residues 651 to 665 (SIDDDEEDYDDIGAA) the composition is skewed to acidic residues. The residue at position 659 (Tyr659) is a Phosphotyrosine.

Interacts (via extracellular domain) with ALCAM/CD166 (via extracellular domain). Interacts with the TCR/CD3 complex subunit CD3E. Interacts (via tyrosine phosphorylated C-terminus) with LCP2 (via SH2 domain). Interacts (via glycosylated extracellular domain) with LGALS1 and LGALS3. Interaction with LGALS1 or LGALS3 inhibits interaction with ALCAM. Interacts with VAV1. In terms of processing, after T-cell activation, becomes hyperphosphorylated on Ser and Thr residues. Phosphorylated on tyrosine residues in response to stimulation of the TCR complex. Glycosylated. Expressed predominantly in thymus, lymph node and spleen.

It localises to the cell membrane. In terms of biological role, cell adhesion molecule that mediates cell-cell contacts and regulates T-cell responses via its interaction with ALCAM/CD166. Contributes to signaling cascades triggered by activation of the TCR/CD3 complex. Functions as a costimulatory molecule; promotes T-cell activation and proliferation. Contributes to the formation and maturation of the immunological synapse. Functions as a calcium-dependent pattern receptor that binds and aggregates both Gram-positive and Gram-negative bacteria. Binds both lipopolysaccharide (LPS) from Gram-negative bacteria and lipoteichoic acid from Gram-positive bacteria. LPS binding leads to the activation of signaling cascades and down-stream MAP kinases. Mediates activation of the inflammatory response and the secretion of pro-inflammatory cytokines in response to LPS. The protein is T-cell differentiation antigen CD6 (Cd6) of Mus musculus (Mouse).